Reading from the N-terminus, the 1830-residue chain is Dedicator of cytokinesis protein 2 (1830 aa).

Residues 8 to 69 (DKERHGVAIY…PKSFIHIKEV (62 aa)) enclose the SH3 domain. Lysine 304 bears the N6-acetyllysine mark. Residues 423-607 (RNDIYITLLQ…DVFSISTLVC (185 aa)) form the C2 DOCK-type domain. A phosphoserine mark is found at serine 588 and serine 593. The residue at position 738 (lysine 738) is an N6-acetyllysine. Positions 939–1476 (CMTAILNQMG…TSFVTAYKLP (538 aa)) are interaction with CRKL. The 412-residue stretch at 1211–1622 (YKDNNREEMY…VEKEYGVREM (412 aa)) folds into the DOCKER domain. Residues 1651–1665 (MNSDCSTPSKPTSES) are compositionally biased toward polar residues. The segment at 1651–1704 (MNSDCSTPSKPTSESFDLELASPKTPRVEQEEPISPGSTLPEVKLRRSKKRTKR) is disordered. Phosphoserine occurs at positions 1685, 1706, 1731, and 1784.

Belongs to the DOCK family. In terms of assembly, homodimer. Interacts with RAC1 and RAC2. Interacts with CRKL and VAV. Interacts with CD3Z. As to expression, specifically expressed in hematopoietic cells. Highly expressed in peripheral blood leukocytes, and expressed at intermediate level in thymus and spleen. Expressed at very low level in the small intestine and colon.

The protein resides in the endomembrane system. Its subcellular location is the cytoplasm. It localises to the cytoskeleton. Its function is as follows. Involved in cytoskeletal rearrangements required for lymphocyte migration in response of chemokines. Activates RAC1 and RAC2, but not CDC42, by functioning as a guanine nucleotide exchange factor (GEF), which exchanges bound GDP for free GTP. May also participate in IL2 transcriptional activation via the activation of RAC2. In Homo sapiens (Human), this protein is Dedicator of cytokinesis protein 2 (DOCK2).